We begin with the raw amino-acid sequence, 264 residues long: 3-methyl-2-oxobutanoate hydroxymethyltransferase (264 aa).

Mg(2+)-binding residues include Asp-45 and Asp-84. 3-methyl-2-oxobutanoate is bound by residues 45–46 (DS), Asp-84, and Lys-113. Residue Glu-115 participates in Mg(2+) binding. The active-site Proton acceptor is Glu-182.

It belongs to the PanB family. As to quaternary structure, homodecamer; pentamer of dimers. The cofactor is Mg(2+).

The protein localises to the cytoplasm. It catalyses the reaction 3-methyl-2-oxobutanoate + (6R)-5,10-methylene-5,6,7,8-tetrahydrofolate + H2O = 2-dehydropantoate + (6S)-5,6,7,8-tetrahydrofolate. Its pathway is cofactor biosynthesis; (R)-pantothenate biosynthesis; (R)-pantoate from 3-methyl-2-oxobutanoate: step 1/2. In terms of biological role, catalyzes the reversible reaction in which hydroxymethyl group from 5,10-methylenetetrahydrofolate is transferred onto alpha-ketoisovalerate to form ketopantoate. The polypeptide is 3-methyl-2-oxobutanoate hydroxymethyltransferase (Caldicellulosiruptor saccharolyticus (strain ATCC 43494 / DSM 8903 / Tp8T 6331)).